A 530-amino-acid chain; its full sequence is Histone-arginine methyltransferase CARMER (530 aa).

Residues 141–450 (ASQYFQFYGY…QSYDVTIDLH (310 aa)) enclose the SAM-dependent MTase PRMT-type domain. Residues glutamine 154, arginine 163, glycine 187, glutamate 209, glutamate 238, and threonine 266 each coordinate S-adenosyl-L-methionine. The residue at position 501 (arginine 501) is an Asymmetric dimethylarginine; by autocatalysis.

The protein belongs to the class I-like SAM-binding methyltransferase superfamily. Protein arginine N-methyltransferase family. Homodimer. Post-translationally, the dimethylated protein is the major form.

The protein resides in the cytoplasm. It is found in the nucleus. The enzyme catalyses L-arginyl-[protein] + 2 S-adenosyl-L-methionine = N(omega),N(omega)-dimethyl-L-arginyl-[protein] + 2 S-adenosyl-L-homocysteine + 2 H(+). Its function is as follows. Methylates (mono- and asymmetric dimethylation) the guanidino nitrogens of arginyl residues in proteins. May methylate histone H3 at 'Arg-17' and activate transcription via chromatin remodeling. This Drosophila erecta (Fruit fly) protein is Histone-arginine methyltransferase CARMER (Art4).